We begin with the raw amino-acid sequence, 483 residues long: ATP synthase subunit beta (483 aa).

162 to 169 lines the ATP pocket; the sequence is GGAGVGKT.

The protein belongs to the ATPase alpha/beta chains family. F-type ATPases have 2 components, CF(1) - the catalytic core - and CF(0) - the membrane proton channel. CF(1) has five subunits: alpha(3), beta(3), gamma(1), delta(1), epsilon(1). CF(0) has four main subunits: a(1), b(1), b'(1) and c(9-12).

Its subcellular location is the cellular thylakoid membrane. The catalysed reaction is ATP + H2O + 4 H(+)(in) = ADP + phosphate + 5 H(+)(out). In terms of biological role, produces ATP from ADP in the presence of a proton gradient across the membrane. The catalytic sites are hosted primarily by the beta subunits. The protein is ATP synthase subunit beta of Synechocystis sp. (strain ATCC 27184 / PCC 6803 / Kazusa).